The sequence spans 199 residues: Octanoyltransferase (199 aa).

The BPL/LPL catalytic domain maps to serine 27–lysine 199. Substrate-binding positions include arginine 66–histidine 73, serine 133–glycine 135, and glycine 146–alanine 148. Cysteine 164 acts as the Acyl-thioester intermediate in catalysis.

This sequence belongs to the LipB family.

The protein localises to the cytoplasm. The enzyme catalyses octanoyl-[ACP] + L-lysyl-[protein] = N(6)-octanoyl-L-lysyl-[protein] + holo-[ACP] + H(+). It functions in the pathway protein modification; protein lipoylation via endogenous pathway; protein N(6)-(lipoyl)lysine from octanoyl-[acyl-carrier-protein]: step 1/2. Catalyzes the transfer of endogenously produced octanoic acid from octanoyl-acyl-carrier-protein onto the lipoyl domains of lipoate-dependent enzymes. Lipoyl-ACP can also act as a substrate although octanoyl-ACP is likely to be the physiological substrate. In Legionella pneumophila (strain Lens), this protein is Octanoyltransferase.